Consider the following 235-residue polypeptide: Ribosomal RNA small subunit methyltransferase G (235 aa).

S-adenosyl-L-methionine-binding positions include Gly-98, Met-103, 149–150 (VE), and Arg-164.

This sequence belongs to the methyltransferase superfamily. RNA methyltransferase RsmG family.

It is found in the cytoplasm. The enzyme catalyses guanosine(527) in 16S rRNA + S-adenosyl-L-methionine = N(7)-methylguanosine(527) in 16S rRNA + S-adenosyl-L-homocysteine. In terms of biological role, specifically methylates the N7 position of guanine in position 527 of 16S rRNA. The sequence is that of Ribosomal RNA small subunit methyltransferase G from Cupriavidus metallidurans (strain ATCC 43123 / DSM 2839 / NBRC 102507 / CH34) (Ralstonia metallidurans).